The chain runs to 310 residues: 4-hydroxyproline epimerase (310 aa).

Catalysis depends on cysteine 88, which acts as the Proton acceptor. Residues 89 to 90 (GH), histidine 208, and aspartate 232 contribute to the substrate site. Catalysis depends on cysteine 236, which acts as the Proton donor. 237–238 (GT) is a substrate binding site.

Belongs to the proline racemase family. Homodimer.

The enzyme catalyses trans-4-hydroxy-L-proline = cis-4-hydroxy-D-proline. In terms of biological role, allows intracellular utilization of 4-hydroxyproline, one of the major constituents of host collagen, by converting 4-hydroxy-L-proline to 4-hydroxy-D-proline, which can be further metabolized by intracellular 4-hydroxy-D-proline oxidases. In Burkholderia cenocepacia (strain HI2424), this protein is 4-hydroxyproline epimerase.